Reading from the N-terminus, the 475-residue chain is MVVGDIATGTELLVIGAGPGGYVAAIRAAQNGIDTTLVEKDAYGGTCLNYGCIPSKALITGANLAHEAGNAEEMGIHADPVVDMSQLRDWKSGVVDQLTGGVEKLCKANGVNLVEGTARFKDENAVRIAHGGEGQGSETIEFEHCIIATGSRVIQIPGFDFGDEPVWSSRDALEADTVPERLVVVGGGYIGMELSTTFAKLGADVTVVEMLDDILPGYESDVARVVRKRAEELGIDMHLGEGASGWREEDDGIMVTTETEDGEENEYRADKVLVAVGRSPVTDTMDIENAGLEADDRGFLSVDDRRRTDVEHIYAVGDVVEDTPMLAHVASKEGIVAAEHVAGEPVAFDSQAVPAAVFTDPEIGTVGMTEADAEEAGFTPVVGQMPFRASGRALTTNHADGFVRVVADEESGFVLGAQIVGPEASELIAELAFAIEMGATLEDVASTIHTHPTLAEAVMEAAENALGQAIHTLNR.

Residues 39–47 (EKDAYGGTC), Lys56, and Ala118 each bind FAD. Cysteines 47 and 52 form a disulfide. NAD(+) contacts are provided by residues 186–190 (GGGYI), Glu209, and 275–278 (AVGR). The FAD site is built by Asp318 and Ala327. The Proton acceptor role is filled by His451.

It belongs to the class-I pyridine nucleotide-disulfide oxidoreductase family. Homodimer. It depends on FAD as a cofactor.

It localises to the cytoplasm. The enzyme catalyses N(6)-[(R)-dihydrolipoyl]-L-lysyl-[protein] + NAD(+) = N(6)-[(R)-lipoyl]-L-lysyl-[protein] + NADH + H(+). This chain is Dihydrolipoyl dehydrogenase (lpdA), found in Haloferax volcanii (strain ATCC 29605 / DSM 3757 / JCM 8879 / NBRC 14742 / NCIMB 2012 / VKM B-1768 / DS2) (Halobacterium volcanii).